The primary structure comprises 486 residues: Pentatricopeptide repeat-containing protein At2g01860 (486 aa).

The tract at residues 111–137 is disordered; sequence QKPDKPSRVRPLPLPQPHKLRPLGLPT. PPR repeat units follow at residues 290 to 321, 327 to 361, 362 to 396, 397 to 431, and 432 to 466; these read DSSV…LKKR, SQQD…NREP, SVVM…NCLL, DLPA…GFSP, and TYDI…GLRL.

It belongs to the PPR family. P subfamily.

The polypeptide is Pentatricopeptide repeat-containing protein At2g01860 (EMB975) (Arabidopsis thaliana (Mouse-ear cress)).